A 149-amino-acid polypeptide reads, in one-letter code: Prefoldin subunit alpha (149 aa).

The protein belongs to the prefoldin alpha subunit family. In terms of assembly, heterohexamer of two alpha and four beta subunits.

Its subcellular location is the cytoplasm. Molecular chaperone capable of stabilizing a range of proteins. Seems to fulfill an ATP-independent, HSP70-like function in archaeal de novo protein folding. This is Prefoldin subunit alpha from Methanoculleus marisnigri (strain ATCC 35101 / DSM 1498 / JR1).